The sequence spans 155 residues: 6,7-dimethyl-8-ribityllumazine synthase (155 aa).

5-amino-6-(D-ribitylamino)uracil is bound by residues phenylalanine 23, 57–59 (AFE), and 81–83 (AVI). 86 to 87 (ST) contributes to the (2S)-2-hydroxy-3-oxobutyl phosphate binding site. Histidine 89 functions as the Proton donor in the catalytic mechanism. A 5-amino-6-(D-ribitylamino)uracil-binding site is contributed by phenylalanine 114. Arginine 128 is a (2S)-2-hydroxy-3-oxobutyl phosphate binding site.

It belongs to the DMRL synthase family.

The enzyme catalyses (2S)-2-hydroxy-3-oxobutyl phosphate + 5-amino-6-(D-ribitylamino)uracil = 6,7-dimethyl-8-(1-D-ribityl)lumazine + phosphate + 2 H2O + H(+). The protein operates within cofactor biosynthesis; riboflavin biosynthesis; riboflavin from 2-hydroxy-3-oxobutyl phosphate and 5-amino-6-(D-ribitylamino)uracil: step 1/2. In terms of biological role, catalyzes the formation of 6,7-dimethyl-8-ribityllumazine by condensation of 5-amino-6-(D-ribitylamino)uracil with 3,4-dihydroxy-2-butanone 4-phosphate. This is the penultimate step in the biosynthesis of riboflavin. In Dehalococcoides mccartyi (strain ATCC BAA-2266 / KCTC 15142 / 195) (Dehalococcoides ethenogenes (strain 195)), this protein is 6,7-dimethyl-8-ribityllumazine synthase.